The primary structure comprises 106 residues: Large ribosomal subunit protein uL24 (106 aa).

Belongs to the universal ribosomal protein uL24 family. As to quaternary structure, part of the 50S ribosomal subunit.

In terms of biological role, one of two assembly initiator proteins, it binds directly to the 5'-end of the 23S rRNA, where it nucleates assembly of the 50S subunit. Functionally, one of the proteins that surrounds the polypeptide exit tunnel on the outside of the subunit. The sequence is that of Large ribosomal subunit protein uL24 from Acidiphilium cryptum (strain JF-5).